We begin with the raw amino-acid sequence, 1064 residues long: DNA-directed RNA polymerase subunit beta (1064 aa).

Belongs to the RNA polymerase beta chain family. In plastids the minimal PEP RNA polymerase catalytic core is composed of four subunits: alpha, beta, beta', and beta''. When a (nuclear-encoded) sigma factor is associated with the core the holoenzyme is formed, which can initiate transcription.

The protein resides in the plastid. Its subcellular location is the chloroplast. The catalysed reaction is RNA(n) + a ribonucleoside 5'-triphosphate = RNA(n+1) + diphosphate. In terms of biological role, DNA-dependent RNA polymerase catalyzes the transcription of DNA into RNA using the four ribonucleoside triphosphates as substrates. This is DNA-directed RNA polymerase subunit beta from Jasminum nudiflorum (Winter jasmine).